The chain runs to 231 residues: NifU-like protein 1, chloroplastic (231 aa).

The transit peptide at 1–69 (MMASLATSIS…SSQGEKISPL (69 aa)) directs the protein to the chloroplast.

It belongs to the NifU family. Homodimer; disulfide-linked. In terms of tissue distribution, predominantly expressed in floral stalks and siliques. Expressed in leaves, cauline leaves, flower stalks and flowers (at protein level).

The protein resides in the plastid. It localises to the chloroplast stroma. Molecular scaffold for [Fe-S] cluster assembly of chloroplastic iron-sulfur proteins. This is NifU-like protein 1, chloroplastic (NIFU1) from Arabidopsis thaliana (Mouse-ear cress).